The sequence spans 1152 residues: Calcium-activated potassium channel subunit alpha-1 (1152 aa).

Residues 1 to 37 (MSSNIHANHLSLDASSSSSSSSSSSSSSSSSSSSVHE) form a disordered region. Over 1–60 (MSSNIHANHLSLDASSSSSSSSSSSSSSSSSSSSVHEPKMDALIIPVTMEVPCDSRGQRM) the chain is Extracellular. The segment covering 15–34 (SSSSSSSSSSSSSSSSSSSS) has biased composition (low complexity). The helical transmembrane segment at 61-81 (WWAFLASSMVTFFGGLFIILL) threads the bilayer. At 82–152 (WRTLKYLWTV…MISAQTLTGR (71 aa)) the chain is on the cytoplasmic side. S-palmitoyl cysteine attachment occurs at residues cysteine 92, cysteine 93, and cysteine 95. A helical transmembrane segment spans residues 153 to 173 (VLVVLVFALSIGALVIYFIDS). Topologically, residues 174–188 (SNPIESCQNFYKDFT) are extracellular. The chain crosses the membrane as a helical span at residues 189–209 (LQIDMAFNVFFLLYFGLRFIA). At 210–213 (ANDK) the chain is on the cytoplasmic side. Residues 214-234 (LWFWLEVNSVVDFFTVPPVFV) traverse the membrane as a helical segment. Over 235–238 (SVYL) the chain is Extracellular. Residues 239-259 (NRSWLGLRFLRALRLIQFSEI) traverse the membrane as a helical; Voltage-sensor segment. Over 260–274 (LQFLNILKTSNSIKL) the chain is Cytoplasmic. A helical membrane pass occupies residues 275–295 (VNLLSIFISTWLTAAGFIHLV). Residues 296–309 (ENSGDPWENFQNNQ) lie on the Extracellular side of the membrane. The pore-forming intramembrane region spans 310–332 (ALTYWECVYLLMVTMSTVGYGDV). Residues 326-329 (TVGY) carry the Selectivity for potassium motif. Over 333 to 341 (YAKTTLGRL) the chain is Extracellular. Residues 342-362 (FMVFFILGGLAMFASYVPEII) form a helical membrane-spanning segment. Topologically, residues 363 to 1152 (ELIGNRKKYG…KQKYVQEERL (790 aa)) are cytoplasmic. The RCK N-terminal 1 domain maps to 381 to 523 (RKHIVVCGHI…WNWKEGDDAI (143 aa)). Residues glutamate 413, glutamine 436, and glutamate 438 each contribute to the Mg(2+) site. The segment S7 stretch occupies residues 530 to 550 (LGFIAQSCLAQGLSTMLANLF). Positions 587-607 (LSFPTVCELCFVKLKLLMIAI) are segment S8. Residues 651–655 (CKACH) form a heme-binding motif region. Positions 675–703 (EQPSTLSPKKKQRNGGMRNSPSSSPKLMR) are disordered. Threonine 679 carries the post-translational modification Phosphothreonine. A phosphoserine mark is found at serine 681, serine 694, and serine 698. The segment at 753–773 (VLSGHVVVCIFGDVSSALIGL) is segment S9. The 145-residue stretch at 755–899 (SGHVVVCIFG…MDRSSPDNSP (145 aa)) folds into the RCK N-terminal 2 domain. A Phosphothreonine modification is found at threonine 886. Phosphoserine occurs at positions 894 and 898. Positions 919–941 (TELVNDTNVQFLDQDDDDDPDTE) match the Calcium bowl motif. 4 residues coordinate Ca(2+): glutamine 928, aspartate 931, aspartate 934, and aspartate 936. The interval 948–968 (FACGTAFAVSVLDSLMSATYF) is segment S10. Residues 1102–1127 (RASLSHSSHSSQSSSKKSSSVHSIPS) show a composition bias toward low complexity. A disordered region spans residues 1102–1152 (RASLSHSSHSSQSSSKKSSSVHSIPSTANRQNRPKSRESRDKQKYVQEERL). Residues 1136–1152 (KSRESRDKQKYVQEERL) show a composition bias toward basic and acidic residues. Residues serine 1137 and serine 1140 each carry the phosphoserine modification.

This sequence belongs to the potassium channel family. Calcium-activated (TC 1.A.1.3) subfamily. KCa1.1/KCNMA1 sub-subfamily. In terms of assembly, homotetramer; which constitutes the calcium-activated potassium channel. Interacts with beta subunits KCNMB1, KCNMB2, KCNMB3 and KCNMB4. Interacts with gamma subunits LRRC26, LRRC38, LRRC52 and LRRC55. Beta and gamma subunits are accessory, and modulate its activity. Interacts with RAB11B. Phosphorylated. Phosphorylation by kinases such as PKA and/or PKG. In smooth muscles, phosphorylation affects its activity. Post-translationally, palmitoylation by ZDHHC22 and ZDHHC23 within the intracellular linker between the S0 and S1 transmembrane domains regulates localization to the plasma membrane. Depalmitoylated by LYPLA1 and LYPLAL1, leading to retard exit from the trans-Golgi network.

It is found in the cell membrane. The enzyme catalyses K(+)(in) = K(+)(out). Ethanol and carbon monoxide-bound heme increase channel activation. Heme inhibits channel activation. Functionally, potassium channel activated by both membrane depolarization or increase in cytosolic Ca(2+) that mediates export of K(+). It is also activated by the concentration of cytosolic Mg(2+). Its activation dampens the excitatory events that elevate the cytosolic Ca(2+) concentration and/or depolarize the cell membrane. It therefore contributes to repolarization of the membrane potential. Plays a key role in controlling excitability in a number of systems, such as regulation of the contraction of smooth muscle, the tuning of hair cells in the cochlea, regulation of transmitter release, and innate immunity. In smooth muscles, its activation by high level of Ca(2+), caused by ryanodine receptors in the sarcoplasmic reticulum, regulates the membrane potential. In cochlea cells, its number and kinetic properties partly determine the characteristic frequency of each hair cell and thereby helps to establish a tonotopic map. Kinetics of KCNMA1 channels are determined by alternative splicing, phosphorylation status and its combination with modulating beta subunits. Highly sensitive to both iberiotoxin (IbTx) and charybdotoxin (CTX). In Sus scrofa (Pig), this protein is Calcium-activated potassium channel subunit alpha-1 (KCNMA1).